A 551-amino-acid polypeptide reads, in one-letter code: Glucans biosynthesis protein D (551 aa).

The tat-type signal signal peptide spans 1-32 (MDRRRFIKGSMAMAAVCGTSGIASLFSQAAFA).

This sequence belongs to the OpgD/OpgG family. Post-translationally, predicted to be exported by the Tat system. The position of the signal peptide cleavage has not been experimentally proven.

Its subcellular location is the periplasm. It functions in the pathway glycan metabolism; osmoregulated periplasmic glucan (OPG) biosynthesis. Probably involved in the control of the structural glucose backbone of osmoregulated periplasmic glucans (OPGs). This chain is Glucans biosynthesis protein D, found in Escherichia coli O9:H4 (strain HS).